The following is a 428-amino-acid chain: L-glutamyl-[BtrI acyl-carrier protein] decarboxylase (428 aa).

K49 is subject to N6-(pyridoxal phosphate)lysine. Pyridoxal 5'-phosphate-binding positions include G228, 269 to 272 (ESGR), and Y375. Substrate-binding residues include R272 and Y375.

The protein belongs to the Orn/Lys/Arg decarboxylase class-II family. As to quaternary structure, homodimer. Pyridoxal 5'-phosphate serves as cofactor.

The enzyme catalyses gamma-L-glutamyl-[BtrI ACP] + H(+) = 4-aminobutanoyl-[BtrI ACP] + CO2. The protein operates within antibiotic biosynthesis; butirosin biosynthesis. Its function is as follows. Pyridoxal phosphate-dependent decarboxylase that catalyzes 1 step in the biosynthesis of the side chain of the aminoglycoside antibiotics in the biosynthetic pathway of butirosin. Able to decarboxylate L-ornithine, L-arginine, L-lysine, but not L-glutamate or any D-amino acids. Has low activity with substrates not bound to an acyl-carrier protein. In Niallia circulans (Bacillus circulans), this protein is L-glutamyl-[BtrI acyl-carrier protein] decarboxylase (btrK).